The chain runs to 735 residues: Ribosomal protein S6 kinase alpha-1 (735 aa).

Phosphoserine is present on serine 54. A Protein kinase 1 domain is found at 62–321; that stretch reads FELLKVLGQG…AEEIKRHIFY (260 aa). Residues 68–76 and lysine 94 each bind ATP; that span reads LGQGSFGKV. Aspartate 187 acts as the Proton acceptor in catalysis. Position 221 is a phosphoserine; by PDPK1 (serine 221). Phosphoserine is present on serine 307. The 70-residue stretch at 322-391 folds into the AGC-kinase C-terminal domain; sequence STIDWNKLYR…VATGLMEDDS (70 aa). Phosphothreonine is present on threonine 359. At serine 363 the chain carries Phosphoserine. Serine 369 and serine 380 each carry phosphoserine; by autocatalysis. One can recognise a Protein kinase 2 domain in the interval 418–675; that stretch reads YIVKETIGVG…AKQVLQHPWI (258 aa). Residues 424–432 and lysine 447 contribute to the ATP site; that span reads IGVGSYSVC. Catalysis depends on aspartate 535, which acts as the Proton acceptor. Threonine 573 bears the Phosphothreonine mark. Phosphoserine is present on serine 732.

The protein belongs to the protein kinase superfamily. AGC Ser/Thr protein kinase family. S6 kinase subfamily. Forms a complex with either MAPK1/ERK2 or MAPK3/ERK1 in quiescent cells. Transiently dissociates following mitogenic stimulation. Interacts with ETV1/ER81 and FGFR1. The cofactor is Mg(2+). Activated by phosphorylation at Ser-221 by PDPK1. Autophosphorylated on Ser-380, as part of the activation process. May be phosphorylated at Thr-359 and Ser-363 by MAPK1/ERK2 and MAPK3/ERK1. Post-translationally, N-terminal myristoylation results in an activated kinase in the absence of added growth factors.

It is found in the nucleus. The protein resides in the cytoplasm. The catalysed reaction is L-seryl-[protein] + ATP = O-phospho-L-seryl-[protein] + ADP + H(+). It catalyses the reaction L-threonyl-[protein] + ATP = O-phospho-L-threonyl-[protein] + ADP + H(+). With respect to regulation, upon extracellular signal or mitogen stimulation, phosphorylated at Thr-573 in the C-terminal kinase domain (CTKD) by MAPK1/ERK2 and MAPK3/ERK1. The activated CTKD then autophosphorylates Ser-380, allowing binding of PDPK1, which in turn phosphorylates Ser-221 in the N-terminal kinase domain (NTDK) leading to the full activation of the protein and subsequent phosphorylation of the substrates by the NTKD. In terms of biological role, serine/threonine-protein kinase that acts downstream of ERK (MAPK1/ERK2 and MAPK3/ERK1) signaling and mediates mitogenic and stress-induced activation of the transcription factors CREB1, ETV1/ER81 and NR4A1/NUR77, regulates translation through RPS6 and EIF4B phosphorylation, and mediates cellular proliferation, survival, and differentiation by modulating mTOR signaling and repressing pro-apoptotic function of BAD and DAPK1. In fibroblast, is required for EGF-stimulated phosphorylation of CREB1, which results in the subsequent transcriptional activation of several immediate-early genes. In response to mitogenic stimulation (EGF and PMA), phosphorylates and activates NR4A1/NUR77 and ETV1/ER81 transcription factors and the cofactor CREBBP. Upon insulin-derived signal, acts indirectly on the transcription regulation of several genes by phosphorylating GSK3B at 'Ser-9' and inhibiting its activity. Phosphorylates RPS6 in response to serum or EGF via an mTOR-independent mechanism and promotes translation initiation by facilitating assembly of the pre-initiation complex. In response to insulin, phosphorylates EIF4B, enhancing EIF4B affinity for the EIF3 complex and stimulating cap-dependent translation. Is involved in the mTOR nutrient-sensing pathway by directly phosphorylating TSC2 at 'Ser-1798', which potently inhibits TSC2 ability to suppress mTOR signaling, and mediates phosphorylation of RPTOR, which regulates mTORC1 activity and may promote rapamycin-sensitive signaling independently of the PI3K/AKT pathway. Also involved in feedback regulation of mTORC1 and mTORC2 by phosphorylating DEPTOR. Mediates cell survival by phosphorylating the pro-apoptotic proteins BAD and DAPK1 and suppressing their pro-apoptotic function. Promotes the survival of hepatic stellate cells by phosphorylating CEBPB in response to the hepatotoxin carbon tetrachloride (CCl4). Mediates induction of hepatocyte prolifration by TGFA through phosphorylation of CEBPB. Is involved in cell cycle regulation by phosphorylating the CDK inhibitor CDKN1B, which promotes CDKN1B association with 14-3-3 proteins and prevents its translocation to the nucleus and inhibition of G1 progression. Phosphorylates EPHA2 at 'Ser-897', the RPS6KA-EPHA2 signaling pathway controls cell migration. In response to mTORC1 activation, phosphorylates EIF4B at 'Ser-406' and 'Ser-422' which stimulates bicarbonate cotransporter SLC4A7 mRNA translation, increasing SLC4A7 protein abundance and function. This chain is Ribosomal protein S6 kinase alpha-1 (Rps6ka1), found in Rattus norvegicus (Rat).